Reading from the N-terminus, the 86-residue chain is uncharacterized protein (86 aa).

The disordered stretch occupies residues 1–21; it reads MLSNSTSRNRHSKHNKKNTRE. The span at 8–17 shows a compositional bias: basic residues; the sequence is RNRHSKHNKK.

This is an uncharacterized protein from Acidianus convivator (ATV).